A 68-amino-acid polypeptide reads, in one-letter code: MTLEMRMVELETRQAFQDDTIQALNDVVVEQGRVIDRLQLQMAELIKRHEEMVGQYGSEGEEAPPPHY.

It belongs to the SlyX family.

The sequence is that of Protein SlyX homolog from Pseudomonas putida (strain GB-1).